The following is a 210-amino-acid chain: Large ribosomal subunit protein bL25 (210 aa).

The segment at 185–210 is disordered; sequence APEPAGQPEVPPEPAEEAKAKTIEKE. Basic and acidic residues predominate over residues 200-210; that stretch reads EEAKAKTIEKE.

This sequence belongs to the bacterial ribosomal protein bL25 family. CTC subfamily. As to quaternary structure, part of the 50S ribosomal subunit; part of the 5S rRNA/L5/L18/L25 subcomplex. Contacts the 5S rRNA. Binds to the 5S rRNA independently of L5 and L18.

Its function is as follows. This is one of the proteins that binds to the 5S RNA in the ribosome where it forms part of the central protuberance. The protein is Large ribosomal subunit protein bL25 of Desulforamulus reducens (strain ATCC BAA-1160 / DSM 100696 / MI-1) (Desulfotomaculum reducens).